The sequence spans 539 residues: Membrane protein insertase YidC (539 aa).

The chain crosses the membrane as a helical span at residues 6-26 (VILAVALSFAVLLGWQFLFPP). A disordered region spans residues 28–63 (PQQPAPAQQEQTAQPNQAVDSSVAGPVSNQLPDPAS). A compositionally biased stretch (low complexity) spans 32–45 (APAQQEQTAQPNQA). Positions 54–63 (VSNQLPDPAS) are enriched in polar residues. 3 helical membrane passes run 349–369 (YGIA…PLSH), 421–441 (MLLQ…TVAL), and 496–516 (IMMF…SGLV).

The protein belongs to the OXA1/ALB3/YidC family. Type 1 subfamily. In terms of assembly, interacts with the Sec translocase complex via SecD. Specifically interacts with transmembrane segments of nascent integral membrane proteins during membrane integration.

The protein localises to the cell inner membrane. Its function is as follows. Required for the insertion and/or proper folding and/or complex formation of integral membrane proteins into the membrane. Involved in integration of membrane proteins that insert both dependently and independently of the Sec translocase complex, as well as at least some lipoproteins. Aids folding of multispanning membrane proteins. The sequence is that of Membrane protein insertase YidC from Maridesulfovibrio salexigens (strain ATCC 14822 / DSM 2638 / NCIMB 8403 / VKM B-1763) (Desulfovibrio salexigens).